A 544-amino-acid chain; its full sequence is 4-coumarate--CoA ligase 1 (544 aa).

Positions 190, 191, 192, 193, 194, and 198 each coordinate ATP. Tyr-240 is a (E)-4-coumaroyl-AMP binding site. Lys-261 contributes to the CoA binding site. The SBD1 stretch occupies residues Asp-263–Gln-332. Positions 310, 332, 333, 337, and 345 each coordinate (E)-4-coumaroyl-AMP. Residues Gln-332, Gly-333, and Thr-337 each contribute to the ATP site. The SBD2 stretch occupies residues Gly-333–Tyr-400. 2 residues coordinate ATP: Asp-421 and Arg-436. The (E)-4-coumaroyl-AMP site is built by Lys-438 and Lys-442. Positions 444 and 445 each coordinate CoA. Lys-527 contributes to the ATP binding site.

This sequence belongs to the ATP-dependent AMP-binding enzyme family. It depends on Mg(2+) as a cofactor.

The catalysed reaction is (E)-4-coumarate + ATP + CoA = (E)-4-coumaroyl-CoA + AMP + diphosphate. It carries out the reaction (E)-4-coumarate + ATP + H(+) = (E)-4-coumaroyl-AMP + diphosphate. The enzyme catalyses (E)-4-coumaroyl-AMP + CoA = (E)-4-coumaroyl-CoA + AMP + H(+). It functions in the pathway phytoalexin biosynthesis; 3,4',5-trihydroxystilbene biosynthesis; 3,4',5-trihydroxystilbene from trans-4-coumarate: step 1/2. Functionally, carboxylate--CoA ligase that may use 4-coumarate as substrate. Follows a two-step reaction mechanism, wherein the carboxylate substrate first undergoes adenylation by ATP, followed by a thioesterification in the presence of CoA to yield the final CoA thioester. In Petroselinum crispum (Parsley), this protein is 4-coumarate--CoA ligase 1 (4CL1).